A 165-amino-acid polypeptide reads, in one-letter code: Nucleotide-binding protein Ccur92_01650 (165 aa).

The protein belongs to the YajQ family.

Nucleotide-binding protein. This is Nucleotide-binding protein Ccur92_01650 from Campylobacter curvus (strain 525.92).